A 503-amino-acid polypeptide reads, in one-letter code: MEEFQGYLELDRSQQHDFLYPLIFREYIYALAHDHGLNRSILLDNVGYDNKSSFLIIKRLISRMYQQNHLIISPNDSNQKKIGGYNKNLYCQMISEGFAVIVEIPFSLRLVSSLEGTEIVKSYNLRSIHSIFPFLEDKFSHLNYVSDVLIPYPIHLEILVQTLRYWAKDPSYLHLLRLFLHDYYNLNSLITKNKSIFSKSNPRLFLLLYNSYVCEYESILLFLRNQSSHLQFTSSWIFFERIHFYEKIKYPVEEVFANDFPAILWFFKDPFMHYVRYQGKSILASKDTPLLMNKWKYYLVNLWQCHFYVWSQPGRIYINQLSKHSLDFLGYLSSIRPNLSVVRSQMLENSFIMDNARKKFDTLVPIIPLIGSLAKVKFCNALGHPISKSTWADSSDFDIIDRFVRICRNLSHYYSGSSKKKSLYQIKYILRLSCVKTLARKHKSTVRTFLKRLGSKLLEEFFTEEEQILSLIFPRASSTLTRFYRGRIWYLDIFCINDLVNHE.

The protein belongs to the intron maturase 2 family. MatK subfamily.

It localises to the plastid. Its subcellular location is the chloroplast. In terms of biological role, usually encoded in the trnK tRNA gene intron. Probably assists in splicing its own and other chloroplast group II introns. The polypeptide is Maturase K (Cercocarpus betuloides (Mountain mahogany)).